We begin with the raw amino-acid sequence, 245 residues long: Mitochondrial import inner membrane translocase subunit Tim21 (245 aa).

Residues methionine 1–serine 18 constitute a mitochondrion transit peptide. A disordered region spans residues phenylalanine 64–serine 97. Positions aspartate 70–serine 79 are enriched in basic and acidic residues. A helical membrane pass occupies residues threonine 108–phenylalanine 128.

This sequence belongs to the TIM21 family. Component of the TIM23 complex. Component of the MITRAC (mitochondrial translation regulation assembly intermediate of cytochrome c oxidase complex) complex, the core components of this complex being COA3/MITRAC12 and COX14. Interacts with COA3 and MT-CO1/COX1.

The protein localises to the mitochondrion membrane. Its function is as follows. Participates in the translocation of transit peptide-containing proteins across the mitochondrial inner membrane. Also required for assembly of mitochondrial respiratory chain complex I and complex IV as component of the MITRAC (mitochondrial translation regulation assembly intermediate of cytochrome c oxidase complex) complex. Probably shuttles between the presequence translocase and respiratory-chain assembly intermediates in a process that promotes incorporation of early nuclear-encoded subunits into these complexes. In Rattus norvegicus (Rat), this protein is Mitochondrial import inner membrane translocase subunit Tim21 (Timm21).